The following is a 507-amino-acid chain: Maturase K (507 aa).

This sequence belongs to the intron maturase 2 family. MatK subfamily.

It is found in the plastid. The protein localises to the chloroplast. In terms of biological role, usually encoded in the trnK tRNA gene intron. Probably assists in splicing its own and other chloroplast group II introns. In Ranunculus macranthus (Large buttercup), this protein is Maturase K.